The following is a 256-amino-acid chain: MTDLKKAAQRAIELMDLTTLNDDDTDQKVIDLCHKAVTPAGNTAAICIYPRFIPIARKTLDELGAEDIQIATVTNFPHGNDDIAIAVLETRAAVAYGADEVDVVFPYRALMEGNESVGYELVKACKEACGDVLLKVIIESGVLADPALIRRASELSIDAGADFIKTSTGKVPVNATLEAAEIMLTVISEKNTKVGFKPAGGVRDAAQAAEFLGVAERILGADWVSPRTFRFGASSLLNSLLHTLELADAPKPTQGY.

Asp102 functions as the Proton donor/acceptor in the catalytic mechanism. Lys165 acts as the Schiff-base intermediate with acetaldehyde in catalysis. Lys197 (proton donor/acceptor) is an active-site residue.

Belongs to the DeoC/FbaB aldolase family. DeoC type 2 subfamily.

The protein resides in the cytoplasm. The catalysed reaction is 2-deoxy-D-ribose 5-phosphate = D-glyceraldehyde 3-phosphate + acetaldehyde. The protein operates within carbohydrate degradation; 2-deoxy-D-ribose 1-phosphate degradation; D-glyceraldehyde 3-phosphate and acetaldehyde from 2-deoxy-alpha-D-ribose 1-phosphate: step 2/2. In terms of biological role, catalyzes a reversible aldol reaction between acetaldehyde and D-glyceraldehyde 3-phosphate to generate 2-deoxy-D-ribose 5-phosphate. The chain is Deoxyribose-phosphate aldolase from Shewanella sp. (strain ANA-3).